Here is a 215-residue protein sequence, read N- to C-terminus: Venom allergen 5.02 (215 aa).

An N-terminal signal peptide occupies residues 1 to 10 (PIINLSFGEA). 4 disulfide bridges follow: cysteine 14-cysteine 26, cysteine 18-cysteine 111, cysteine 36-cysteine 104, and cysteine 181-cysteine 198. One can recognise an SCP domain in the interval 55 to 200 (VNRHNQFRQK…WHTHYLVCNY (146 aa)).

Belongs to the CRISP family. Venom allergen 5-like subfamily. In terms of tissue distribution, expressed by the venom gland.

It is found in the secreted. The sequence is that of Venom allergen 5.02 from Dolichovespula maculata (Bald-faced hornet).